The primary structure comprises 322 residues: Olfactory receptor 11L1 (322 aa).

Residues 1–25 (MEPQNTSTVTNFQLLGFQNLLEWQA) lie on the Extracellular side of the membrane. Asn5 is a glycosylation site (N-linked (GlcNAc...) asparagine). Residues 26–46 (LLFVIFLLIYCLTIIGNVVII) form a helical membrane-spanning segment. The Cytoplasmic portion of the chain corresponds to 47–54 (TVVSQGLR). The helical transmembrane segment at 55 to 75 (LHSPMYMFLQHLSFLEVWYTS) threads the bilayer. The Extracellular portion of the chain corresponds to 76-99 (TTVPLLLANLLSWGQAISFSACMA). A disulfide bond links Cys97 and Cys189. A helical membrane pass occupies residues 100-120 (QLYFFVFLGATECFLLAFMAY). The Cytoplasmic portion of the chain corresponds to 121–139 (DRYLAICSPLRYPFLMHRG). Residues 140-160 (LCARLVVVSWCTGVSTGFLPS) traverse the membrane as a helical segment. At 161 to 197 (LMISRLDFCGRNQINHFFCDLPPLMQLSCSRVYITEV) the chain is on the extracellular side. The helical transmembrane segment at 198-217 (TIFILSIAVLCICFFLTLGP) threads the bilayer. Residues 218-237 (YVFIVSSILRIPSTSGRRKT) are Cytoplasmic-facing. Residues 238–258 (FSTCGSHLAVVTLYYGTMISM) form a helical membrane-spanning segment. The Extracellular segment spans residues 259 to 271 (YVCPSPHLLPEIN). A helical transmembrane segment spans residues 272–292 (KIISVFYTVVTPLLNPVIYSL). Topologically, residues 293 to 322 (RNKDFKEAVRKVMRRKCGILWSTSKRKFLY) are cytoplasmic.

The protein belongs to the G-protein coupled receptor 1 family.

Its subcellular location is the cell membrane. In terms of biological role, odorant receptor. The polypeptide is Olfactory receptor 11L1 (OR11L1) (Homo sapiens (Human)).